Here is a 358-residue protein sequence, read N- to C-terminus: MKMKTVLVIINCIFLAIGNCGGPLMMRLYFQNGGERIWFPSFLQTVGCPLIFFPLLLSFLRRRRCLEEQETTPFFLMKPPLFIAAIVVGLLVGFDNYLYSYGLAYIPVSTASLIISAQLGFTALFAFFMVKQKFTPFTINAIVLLTGGAVVLALNSDSDKLANETHKEYVVGFIMTLGAALLYGFILPLVELSYKKSGQRITYTLALEFQMVLCFAATCVCLVGMLAAGDFKVKHALFIFKNRVIAGEARDFKLGESLYYVVIVFTAIIWQAFFVGAIGLIFCASSLVSGIMVSALLPVTVILAVICFQEKFQAGKGVALALSLWGSVSYFYGQVKSEEKTKAQDTQLSQLPVTDYVA.

The next 10 membrane-spanning stretches (helical) occupy residues 6–26 (VLVI…PLMM), 37–57 (IWFP…PLLL), 74–94 (FFLM…LVGF), 110–130 (TASL…FFMV), 134–154 (FTPF…VLAL), 170–190 (VVGF…LPLV), 209–229 (FQMV…LAAG), 262–282 (VIVF…GLIF), 288–308 (VSGI…VICF), and 312–332 (FQAG…SYFY). Residues 46–154 (VGCPLIFFPL…LTGGAVVLAL (109 aa)) enclose the EamA domain.

Belongs to the purine permeases (TC 2.A.7.14) family. As to expression, expressed in the vascular system of leaves. Restricted to the phloem. Expressed in flowers and roots and not detected in stems.

The protein resides in the membrane. Its activity is regulated as follows. Competitive inhibition of adenine transport by isopentenyladenine, kinetin, benzylaminopurine, trans- and cis-zeatin and trans-zeatin riboside. Functionally, mediates adenine transport. May be involved in the uptake of cytokinin analogs. In Arabidopsis thaliana (Mouse-ear cress), this protein is Purine permease 2 (PUP2).